The primary structure comprises 352 residues: Chorismate synthase (352 aa).

Arg48 contacts NADP(+). FMN contacts are provided by residues 125 to 127 (RSS), 237 to 238 (NA), Gly278, 293 to 297 (KPTSS), and Arg319.

The protein belongs to the chorismate synthase family. As to quaternary structure, homotetramer. The cofactor is FMNH2.

It catalyses the reaction 5-O-(1-carboxyvinyl)-3-phosphoshikimate = chorismate + phosphate. It participates in metabolic intermediate biosynthesis; chorismate biosynthesis; chorismate from D-erythrose 4-phosphate and phosphoenolpyruvate: step 7/7. Catalyzes the anti-1,4-elimination of the C-3 phosphate and the C-6 proR hydrogen from 5-enolpyruvylshikimate-3-phosphate (EPSP) to yield chorismate, which is the branch point compound that serves as the starting substrate for the three terminal pathways of aromatic amino acid biosynthesis. This reaction introduces a second double bond into the aromatic ring system. This Francisella tularensis subsp. holarctica (strain FTNF002-00 / FTA) protein is Chorismate synthase.